Consider the following 177-residue polypeptide: LOB domain-containing protein 33 (177 aa).

Residues 6 to 108 (SSCGACKFLR…EEIEFLGSQM (103 aa)) form the LOB domain.

It belongs to the LOB domain-containing protein family. In terms of tissue distribution, expressed in roots.

The polypeptide is LOB domain-containing protein 33 (LBD33) (Arabidopsis thaliana (Mouse-ear cress)).